We begin with the raw amino-acid sequence, 374 residues long: Peptide chain release factor 2 (374 aa).

Gln252 is modified (N5-methylglutamine).

Belongs to the prokaryotic/mitochondrial release factor family. Methylated by PrmC. Methylation increases the termination efficiency of RF2.

The protein localises to the cytoplasm. Functionally, peptide chain release factor 2 directs the termination of translation in response to the peptide chain termination codons UGA and UAA. The sequence is that of Peptide chain release factor 2 from Stenotrophomonas maltophilia (strain R551-3).